A 227-amino-acid polypeptide reads, in one-letter code: Dephospho-CoA kinase (227 aa).

Positions 31-227 (KIGLTGGIGS…EKLFQFINCL (197 aa)) constitute a DPCK domain. 39–44 (GSGKST) is an ATP binding site.

This sequence belongs to the CoaE family.

It localises to the cytoplasm. It carries out the reaction 3'-dephospho-CoA + ATP = ADP + CoA + H(+). It functions in the pathway cofactor biosynthesis; coenzyme A biosynthesis; CoA from (R)-pantothenate: step 5/5. Functionally, catalyzes the phosphorylation of the 3'-hydroxyl group of dephosphocoenzyme A to form coenzyme A. This chain is Dephospho-CoA kinase, found in Clostridium tetani (strain Massachusetts / E88).